The chain runs to 551 residues: Cleavage and polyadenylation specificity factor subunit 6 (551 aa).

Residues 81–161 (IALYIGNLTW…QNPVVTPCNK (81 aa)) enclose the RRM domain. Threonine 157 bears the Phosphothreonine mark. The span at 169-180 (MQSRKTTQSGQM) shows a compositional bias: polar residues. Disordered stretches follow at residues 169–410 (MQSR…TPLS) and 477–551 (LHGI…YRHR). 3 stretches are compositionally biased toward pro residues: residues 237–265 (TRPPLGPPGPPGPPGPPPPGQVLPPPLAG), 285–366 (GQPP…PPPA), and 377–388 (GPPPTDPYGRPP). Composition is skewed to basic and acidic residues over residues 389 to 404 (PYDRGDYGPPGREMDA) and 489 to 503 (SRRERSRERDHSRSR). 5 positions are modified to phosphoserine: serine 494, serine 500, serine 511, serine 513, and serine 525. The span at 504-514 (EKSRRHKSRSR) shows a compositional bias: basic residues. The segment covering 515-551 (DRHDDYYRERSRERERHRDRDRDRDRERDREREYRHR) has biased composition (basic and acidic residues).

The protein belongs to the RRM CPSF6/7 family. As to quaternary structure, component of the cleavage factor Im (CFIm) complex.

It localises to the nucleus. Its subcellular location is the nucleoplasm. The protein resides in the nucleus speckle. The protein localises to the cytoplasm. Its function is as follows. Component of the cleavage factor Im (CFIm) complex that functions as an activator of the pre-mRNA 3'-end cleavage and polyadenylation processing required for the maturation of pre-mRNA into functional mRNAs. CFIm contributes to the recruitment of multiprotein complexes on specific sequences on the pre-mRNA 3'-end, so called cleavage and polyadenylation signals (pA signals). Most pre-mRNAs contain multiple pA signals, resulting in alternative cleavage and polyadenylation (APA) producing mRNAs with variable 3'-end formation. The CFIm complex acts as a key regulator of cleavage and polyadenylation site choice during APA through its binding to 5'-UGUA-3' elements localized in the 3'-untranslated region (UTR) for a huge number of pre-mRNAs. Plays a role in mRNA export. This chain is Cleavage and polyadenylation specificity factor subunit 6, found in Gallus gallus (Chicken).